A 599-amino-acid chain; its full sequence is Aspartate--tRNA(Asp/Asn) ligase (599 aa).

Position 183 (E183) interacts with L-aspartate. The tract at residues 207–210 (QIFK) is aspartate. R229 lines the L-aspartate pocket. Residues 229-231 (RDE) and Q238 each bind ATP. H456 is a binding site for L-aspartate. Position 490 (E490) interacts with ATP. R497 provides a ligand contact to L-aspartate. 542-545 (GLDR) contributes to the ATP binding site.

It belongs to the class-II aminoacyl-tRNA synthetase family. Type 1 subfamily. In terms of assembly, homodimer.

Its subcellular location is the cytoplasm. It carries out the reaction tRNA(Asx) + L-aspartate + ATP = L-aspartyl-tRNA(Asx) + AMP + diphosphate. Its function is as follows. Aspartyl-tRNA synthetase with relaxed tRNA specificity since it is able to aspartylate not only its cognate tRNA(Asp) but also tRNA(Asn). Reaction proceeds in two steps: L-aspartate is first activated by ATP to form Asp-AMP and then transferred to the acceptor end of tRNA(Asp/Asn). In Protochlamydia amoebophila (strain UWE25), this protein is Aspartate--tRNA(Asp/Asn) ligase.